The following is a 213-amino-acid chain: Vacuolar ATPase assembly integral membrane protein vph2 (213 aa).

2 helical membrane passes run 113–133 (ISAIINILFTVVGTVTAVWYC) and 142–162 (KIALCAFSAILVLVADTFLYV).

It is found in the endoplasmic reticulum membrane. Functionally, required for vacuolar ATPase assembly. In Schizosaccharomyces pombe (strain 972 / ATCC 24843) (Fission yeast), this protein is Vacuolar ATPase assembly integral membrane protein vph2 (vph2).